A 257-amino-acid chain; its full sequence is Ethanolamine ammonia-lyase small subunit (257 aa).

Residues valine 153, glutamate 174, and cysteine 203 each contribute to the adenosylcob(III)alamin site.

It belongs to the EutC family. In terms of assembly, the basic unit is a heterodimer which dimerizes to form tetramers. The heterotetramers trimerize; 6 large subunits form a core ring with 6 small subunits projecting outwards. Adenosylcob(III)alamin serves as cofactor.

The protein resides in the bacterial microcompartment. It carries out the reaction ethanolamine = acetaldehyde + NH4(+). Its pathway is amine and polyamine degradation; ethanolamine degradation. Functionally, catalyzes the deamination of various vicinal amino-alcohols to oxo compounds. Allows this organism to utilize ethanolamine as the sole source of nitrogen and carbon in the presence of external vitamin B12. In Rhodococcus erythropolis (Arthrobacter picolinophilus), this protein is Ethanolamine ammonia-lyase small subunit.